A 532-amino-acid polypeptide reads, in one-letter code: Hepatocyte nuclear factor 1-beta-B (532 aa).

Positions 1–35 are dimerization; the sequence is MFTDMVSKLTSLQQELLSALLDSGVTKDVLVQALE. The HNF-p1 domain occupies 5–36; it reads MVSKLTSLQQELLSALLDSGVTKDVLVQALED. A disordered region spans residues 74–95; sequence TGAQGKGGKLSGDEGSEDGDDF. A POU-specific atypical domain is found at 102-197; the sequence is RELQSLNTEE…IDRQFDRVQG (96 aa). The span at 222-231 shows a compositional bias: gly residues; the sequence is SSGAAGGSGA. Disordered stretches follow at residues 222 to 245 and 500 to 532; these read SSGA…KRMR and EAGQ…LQAW. Residues 244 to 324 constitute a DNA-binding region (homeobox; HNF1-type); sequence MRRNRFKWGP…NRRKEEAFRQ (81 aa). Positions 505–532 are enriched in polar residues; that stretch reads SHPSRYSTMDSSTITHLGSSKQCPLQAW.

The protein belongs to the HNF1 homeobox family. Binds DNA as a dimer. Can form homodimer or heterodimer with HNF1-alpha. First expressed at stage 10 in the intermediate mesoderm. Expressed in rhombomere r5 by 14 hpf with expression diminishing by 18 hpf.

Its subcellular location is the nucleus. Its function is as follows. Transcription factor that binds to the inverted palindrome 5'-GTTAATNATTAAC-3'. Acts downstream of hnf1ba but is not required for induction of rhombomere r5/r6 gene expression in the hindbrain. This chain is Hepatocyte nuclear factor 1-beta-B, found in Danio rerio (Zebrafish).